A 976-amino-acid chain; its full sequence is Serine/threonine-protein kinase CLA4 (976 aa).

The interval 1–46 is disordered; sequence MTSIYTSDLKNHRRAPPPPNGAAGSGSGSSSGSGSGSGSGSGSGSL. Positions 23–43 are enriched in gly residues; the sequence is AGSGSGSSSGSGSGSGSGSGS. The PH domain occupies 73 to 184; that stretch reads SKRQSGWVHV…WLDAFTTKCP (112 aa). A disordered region spans residues 207–231; that stretch reads LTNGSLNGNSSSSPTSGLSSSSVLT. Residues 237 to 250 form the CRIB domain; that stretch reads VSGPINFTHKVHVG. Disordered stretches follow at residues 298–522 and 559–658; these read GGNS…KIHP and SKKS…QLKK. Low complexity-rich tracts occupy residues 313-332 and 371-411; these read NSKT…AKNN and LNGS…PLNN. The segment covering 430-440 has biased composition (polar residues); that stretch reads SGTSSDTYSNK. A compositionally biased stretch (basic and acidic residues) spans 441–455; sequence NHQDRSGYEQQRQQR. Positions 456–487 are enriched in low complexity; that stretch reads TDSSQQQQQQQKQHQYQQKSQQQQQQPLSSHQ. Pro residues predominate over residues 496–505; it reads QVPPTLPSSG. Low complexity predominate over residues 559-583; sequence SKKSQQQLASKQPSPPSSQQQQQKP. Positions 622-635 are enriched in polar residues; sequence NETSGVSKTPSPTD. Residues 685 to 940 enclose the Protein kinase domain; the sequence is FRIVEKAGQG…TDELLEHSFI (256 aa). ATP-binding positions include 691 to 699 and lysine 715; that span reads AGQGASGNV. Aspartate 808 serves as the catalytic Proton acceptor.

Belongs to the protein kinase superfamily. STE Ser/Thr protein kinase family. STE20 subfamily. Interacts (via the CRIB domain) with CDC42.

The enzyme catalyses L-seryl-[protein] + ATP = O-phospho-L-seryl-[protein] + ADP + H(+). The catalysed reaction is L-threonyl-[protein] + ATP = O-phospho-L-threonyl-[protein] + ADP + H(+). Its function is as follows. Ser/Thr kinase required for wild-type filamentous growth, chlamydospore formation, and virulence in mouse systemic infection. The chain is Serine/threonine-protein kinase CLA4 (CLA4) from Candida albicans (strain SC5314 / ATCC MYA-2876) (Yeast).